Consider the following 209-residue polypeptide: MIIAIDGPAASGKGTLGKRLAAHYGFRHLDTGVIYRAVAKAMLDLGADLQDEARAVAVARALDPEKFGDPVLKTQAIGDAASVVSAIPAVREALINFQRQFAADPPGAVLDGRDIGTVICPDADVKIFVVADPKVRAHRRTLEARGRGEAADEALVLADILKRDERDKNRAAAPLKCAADAHVLDNSNLDIEGGVRAAIAIIEQARATR.

7-15 (GPAASGKGT) contributes to the ATP binding site.

This sequence belongs to the cytidylate kinase family. Type 1 subfamily.

The protein resides in the cytoplasm. The enzyme catalyses CMP + ATP = CDP + ADP. The catalysed reaction is dCMP + ATP = dCDP + ADP. The sequence is that of Cytidylate kinase from Afipia carboxidovorans (strain ATCC 49405 / DSM 1227 / KCTC 32145 / OM5) (Oligotropha carboxidovorans).